The chain runs to 61 residues: Photosystem II reaction center protein K (61 aa).

Positions 1-24 (MLNIFCLICICLNSTLYSSSFFFA) are excised as a propeptide. Residues 32–52 (FFNPIIDVMPIIPVLFFLLAF) form a helical membrane-spanning segment.

The protein belongs to the PsbK family. In terms of assembly, PSII is composed of 1 copy each of membrane proteins PsbA, PsbB, PsbC, PsbD, PsbE, PsbF, PsbH, PsbI, PsbJ, PsbK, PsbL, PsbM, PsbT, PsbX, PsbY, PsbZ, Psb30/Ycf12, at least 3 peripheral proteins of the oxygen-evolving complex and a large number of cofactors. It forms dimeric complexes.

It is found in the plastid. It localises to the chloroplast thylakoid membrane. In terms of biological role, one of the components of the core complex of photosystem II (PSII). PSII is a light-driven water:plastoquinone oxidoreductase that uses light energy to abstract electrons from H(2)O, generating O(2) and a proton gradient subsequently used for ATP formation. It consists of a core antenna complex that captures photons, and an electron transfer chain that converts photonic excitation into a charge separation. The protein is Photosystem II reaction center protein K of Phalaenopsis aphrodite subsp. formosana (Moth orchid).